Reading from the N-terminus, the 120-residue chain is MFVNRRYTARGKNLPSSPKKVRPIADNIRGKPYTEAVAILYSMPNKGAKLLGKVVKSAASNAMYHNRNLSEDMIFVKTVMVDDGRKRRSIWPRARGRADRLVNRSCHIFVEVYEKMYGGE.

Positions 1–20 (MFVNRRYTARGKNLPSSPKK) are disordered.

Belongs to the universal ribosomal protein uL22 family. In terms of assembly, part of the 50S ribosomal subunit.

This protein binds specifically to 23S rRNA; its binding is stimulated by other ribosomal proteins, e.g. L4, L17, and L20. It is important during the early stages of 50S assembly. It makes multiple contacts with different domains of the 23S rRNA in the assembled 50S subunit and ribosome. Its function is as follows. The globular domain of the protein is located near the polypeptide exit tunnel on the outside of the subunit, while an extended beta-hairpin is found that lines the wall of the exit tunnel in the center of the 70S ribosome. This chain is Large ribosomal subunit protein uL22, found in Borrelia hermsii (strain HS1 / DAH).